Reading from the N-terminus, the 248-residue chain is Probable transcriptional regulatory protein Acel_1346 (248 aa).

This sequence belongs to the TACO1 family.

It localises to the cytoplasm. This chain is Probable transcriptional regulatory protein Acel_1346, found in Acidothermus cellulolyticus (strain ATCC 43068 / DSM 8971 / 11B).